The following is a 366-amino-acid chain: Sulfate/thiosulfate import ATP-binding protein CysA 2 (366 aa).

One can recognise an ABC transporter domain in the interval 14–243; that stretch reads LSVHALCRRF…PASRFVAEFV (230 aa). 46 to 53 is a binding site for ATP; sequence GPSGCGKT.

It belongs to the ABC transporter superfamily. Sulfate/tungstate importer (TC 3.A.1.6) family. As to quaternary structure, the complex is composed of two ATP-binding proteins (CysA), two transmembrane proteins (CysT and CysW) and a solute-binding protein (CysP).

Its subcellular location is the cell inner membrane. It carries out the reaction sulfate(out) + ATP + H2O = sulfate(in) + ADP + phosphate + H(+). The catalysed reaction is thiosulfate(out) + ATP + H2O = thiosulfate(in) + ADP + phosphate + H(+). In terms of biological role, part of the ABC transporter complex CysAWTP involved in sulfate/thiosulfate import. Responsible for energy coupling to the transport system. In Chromobacterium violaceum (strain ATCC 12472 / DSM 30191 / JCM 1249 / CCUG 213 / NBRC 12614 / NCIMB 9131 / NCTC 9757 / MK), this protein is Sulfate/thiosulfate import ATP-binding protein CysA 2.